The sequence spans 415 residues: tRNA(Ile2) 2-agmatinylcytidine synthetase TiaS (415 aa).

Belongs to the TiaS family.

It is found in the cytoplasm. It catalyses the reaction cytidine(34) in tRNA(Ile2) + agmatine + ATP + H2O = 2-agmatinylcytidine(34) in tRNA(Ile2) + AMP + 2 phosphate + 2 H(+). In terms of biological role, ATP-dependent agmatine transferase that catalyzes the formation of 2-agmatinylcytidine (agm2C) at the wobble position (C34) of tRNA(Ile2), converting the codon specificity from AUG to AUA. In Methanocorpusculum labreanum (strain ATCC 43576 / DSM 4855 / Z), this protein is tRNA(Ile2) 2-agmatinylcytidine synthetase TiaS.